The sequence spans 186 residues: Large ribosomal subunit protein uL5 (186 aa).

Belongs to the universal ribosomal protein uL5 family. As to quaternary structure, part of the 50S ribosomal subunit; part of the 5S rRNA/L5/L18/L25 subcomplex. Contacts the 5S rRNA and the P site tRNA. Forms a bridge to the 30S subunit in the 70S ribosome.

This is one of the proteins that bind and probably mediate the attachment of the 5S RNA into the large ribosomal subunit, where it forms part of the central protuberance. In the 70S ribosome it contacts protein S13 of the 30S subunit (bridge B1b), connecting the 2 subunits; this bridge is implicated in subunit movement. Contacts the P site tRNA; the 5S rRNA and some of its associated proteins might help stabilize positioning of ribosome-bound tRNAs. The polypeptide is Large ribosomal subunit protein uL5 (Legionella pneumophila subsp. pneumophila (strain Philadelphia 1 / ATCC 33152 / DSM 7513)).